The following is a 675-amino-acid chain: Protein PALS1 (675 aa).

Disordered regions lie at residues 1 to 32 and 52 to 79; these read MTTS…HPKH and RSAQ…KQEL. The required for the correct localization of PALS1 and PATJ at cell-cell contacts and the normal formation of tight junctions and adherens junctions stretch occupies residues 1-345; sequence MTTSYMNGHV…QQIKPPPAKE (345 aa). Phosphoserine is present on residues S14 and S25. An interaction with PARD6B region spans residues 21-140; sequence LGLASPEEHP…LKHIQHTLVD (120 aa). The segment covering 54-79 has biased composition (basic and acidic residues); sequence AQLERIRQQQEDMRRRREEEGKKQEL. Phosphoserine is present on residues S83 and S84. L27 domains are found at residues 120–177 and 179–235; these read KILE…NKAS and PFPL…MQLE. Residues 181 to 243 form an interaction with LIN7C region; it reads PLIANVQDLV…LEPITDERVY (63 aa). Residues 256–336 enclose the PDZ domain; that stretch reads IVRIEKARDI…TLTFVLIPSQ (81 aa). The 73-residue stretch at 345 to 417 folds into the SH3 domain; the sequence is ETVIHVKAHF…PGKSFQQQRE (73 aa). In terms of domain architecture, Guanylate kinase-like spans 479–660; that stretch reads KRPIILIGPQ…AYQELLRLIN (182 aa). 486–493 contributes to the ATP binding site; it reads GPQNCGQN.

The protein belongs to the MAGUK family. As to quaternary structure, heterodimer with MPP1. Forms a heterotrimeric complex composed of PALS1, LIN7B and PATJ; the N-terminal L27 domain of PALS1 interacts with the L27 domain of PATJ and the C-terminal L27 domain of PALS1 interacts with the L27 domain of LIN7B. Component of a complex composed of PALS1, CRB1 and MPP4. Component of a complex whose core is composed of ARHGAP17, AMOT, PALS1, PATJ and PARD3/PAR3. Component of a complex composed of PALS1, CRB1 and EPB41L5. Within the complex, interacts (via HOOK domain) with EPB41L5 (via FERM domain), and interacts with CRB1 (via intracellular domain). Component of a complex composed of PALS1, MPP3 and CRB1; PALS1 acts as a bridging protein between MPP3 (via guanylate kinase-like domain) and CRB1. Component of a complex composed of CRB3, PALS1 and PATJ. As part of the Crumbs complex; interacts with WWP1, the interaction is enhanced by AMOTL2 and facilitates WWP1 localization to the plasma membrane. The Crumbs complex promotes monoubiquitination of AMOTL2 by WWP1, which activates the Hippo signaling pathway. Interacts (via PDZ domain) with PATJ (via N-terminus). Interacts with EZR. Interacts (via PDZ domain) with CRB1 (via C-terminal ERLI motif). While the PDZ domain is sufficient for interaction with CRB1, the adjacent SH3 and guanylate kinase-like domains are likely to contribute to a high affinity interaction. Interacts with WWTR1/TAZ (via WW domain). Interacts with MPP7. Interacts (via PDZ domain) with CRB3 (via C-terminus). Interacts with LIN7C. Interacts with MPDZ. Interacts with PARD6B. Interacts with SC6A1. Interacts with CDH5; the interaction promotes PALS1 localization to cell junctions and is required for CDH5-mediated vascular lumen formation and endothelial cell. Interacts with NPHP1 (via coiled coil and SH3 domains). Interacts with NPHP4. Interacts with CRB2.

The protein resides in the golgi apparatus. It is found in the cell membrane. The protein localises to the endomembrane system. It localises to the cell junction. Its subcellular location is the tight junction. The protein resides in the adherens junction. It is found in the cell projection. The protein localises to the axon. It localises to the perikaryon. Its subcellular location is the apical cell membrane. Its function is as follows. Plays a role in tight junction biogenesis and in the establishment of cell polarity in epithelial cells. Also involved in adherens junction biogenesis by ensuring correct localization of the exocyst complex protein EXOC4/SEC8 which allows trafficking of adherens junction structural component CDH1 to the cell surface. Plays a role through its interaction with CDH5 in vascular lumen formation and endothelial membrane polarity. Required during embryonic and postnatal retinal development. Required for the maintenance of cerebellar progenitor cells in an undifferentiated proliferative state, preventing premature differentiation, and is required for cerebellar histogenesis, fissure formation, cerebellar layer organization and cortical development. Plays a role in neuronal progenitor cell survival, potentially via promotion of mTOR signaling. Plays a role in the radial and longitudinal extension of the myelin sheath in Schwann cells. May modulate SC6A1/GAT1-mediated GABA uptake by stabilizing the transporter. May play a role in the T-cell receptor-mediated activation of NF-kappa-B. Required for localization of EZR to the apical membrane of parietal cells and may play a role in the dynamic remodeling of the apical cytoskeleton. Required for the normal polarized localization of the vesicular marker STX4. Required for the correct trafficking of the myelin proteins PMP22 and MAG. Involved in promoting phosphorylation and cytoplasmic retention of transcriptional coactivators YAP1 and WWTR1/TAZ which leads to suppression of TGFB1-dependent transcription of target genes such as CCN2/CTGF, SERPINE1/PAI1, SNAI1/SNAIL1 and SMAD7. The chain is Protein PALS1 from Rattus norvegicus (Rat).